The sequence spans 357 residues: Acyl-coenzyme A diphosphatase NUDT19 (357 aa).

Residues 10–242 (AATVMLAAGW…IWLAPPQFYE (233 aa)) enclose the Nudix hydrolase domain. Residues 97–118 (AALPDDVALRICAIRETFEEAG) carry the Nudix box motif. 2 residues coordinate Mg(2+): Glu112 and Glu116. The residue at position 300 (Lys300) is an N6-succinyllysine. Residues 355-357 (ARL) carry the Microbody targeting signal motif.

Belongs to the Nudix hydrolase family. In terms of assembly, monomer. Mg(2+) serves as cofactor. It depends on Mn(2+) as a cofactor.

The protein localises to the peroxisome. The enzyme catalyses an acyl-CoA + H2O = an acyl-4'-phosphopantetheine + adenosine 3',5'-bisphosphate + 2 H(+). It carries out the reaction CoA + H2O = (R)-4'-phosphopantetheine + adenosine 3',5'-bisphosphate + 2 H(+). It catalyses the reaction hexanoyl-CoA + H2O = hexanoyl-4'-phosphopantetheine + adenosine 3',5'-bisphosphate + 2 H(+). The catalysed reaction is octanoyl-CoA + H2O = S-octanoyl-4'-phosphopantetheine + adenosine 3',5'-bisphosphate + 2 H(+). The enzyme catalyses butanoyl-CoA + H2O = S-butanoyl-4'-phosphopantetheine + adenosine 3',5'-bisphosphate + 2 H(+). It carries out the reaction propanoyl-CoA + H2O = propanoyl-4'-phosphopantetheine + adenosine 3',5'-bisphosphate + 2 H(+). It catalyses the reaction malonyl-CoA + H2O = malonyl-4'-phosphopantetheine + adenosine 3',5'-bisphosphate + 2 H(+). The catalysed reaction is succinyl-CoA + H2O = succinyl-4'-phosphopantetheine + adenosine 3',5'-bisphosphate + 2 H(+). The enzyme catalyses choloyl-CoA + H2O = S-choloyl-4'-phosphopantetheine + adenosine 3',5'-bisphosphate + 2 H(+). It carries out the reaction 4,8-dimethylnonanoyl-CoA + H2O = S-(4,8-dimethylnonanoyl)-4'-phosphopantetheine + adenosine 3',5'-bisphosphate + 2 H(+). It catalyses the reaction (9Z,12Z,15Z)-octadecatrienoyl-CoA + H2O = S-(9Z,12Z,15Z-octadecatrienoyl)-4'-phosphopantetheine + adenosine 3',5'-bisphosphate + 2 H(+). The catalysed reaction is (9Z,12Z)-octadecadienoyl-CoA + H2O = S-(9Z,12Z-octadecadienoyl)-4'-phosphopantetheine + adenosine 3',5'-bisphosphate + 2 H(+). The enzyme catalyses (9Z)-hexadecenoyl-CoA + H2O = S-(9Z-hexadecenoyl)-4'-phosphopantetheine + adenosine 3',5'-bisphosphate + 2 H(+). It carries out the reaction (9Z)-tetradecenoyl-CoA + H2O = S-(9Z-tetradecenoyl)-4'-phosphopantetheine + adenosine 3',5'-bisphosphate + 2 H(+). It catalyses the reaction (6Z)-octenoyl-CoA + H2O = S-(6Z-octenoyl)-4'-phosphopantetheine + adenosine 3',5'-bisphosphate + 2 H(+). The catalysed reaction is hexadecanoyl-CoA + H2O = S-hexadecanoyl-4'-phosphopantetheine + adenosine 3',5'-bisphosphate + 2 H(+). The enzyme catalyses tetradecanoyl-CoA + H2O = tetradecanoyl-4'-phosphopantetheine + adenosine 3',5'-bisphosphate + 2 H(+). It carries out the reaction dodecanoyl-CoA + H2O = S-dodecanoyl-4'-phosphopantetheine + adenosine 3',5'-bisphosphate + 2 H(+). It catalyses the reaction a 5'-end CoA-ribonucleoside in mRNA + H2O = a 5'-end phospho-adenosine-phospho-ribonucleoside in mRNA + (R)-4'-phosphopantetheine + 2 H(+). Functionally, fatty acyl-coenzyme A (CoA) diphosphatase that hydrolyzes fatty acyl-CoA to yield acyl-4'-phosphopantetheine and adenosine 3',5'-bisphosphate. Mediates the hydrolysis of a wide range of CoA esters, including choloyl-CoA and branched-chain fatty-acyl-CoA esters and at low substrate concentrations medium and long-chain fatty-acyl-CoA esters are the primary substrates. Highest activity seen with medium-chain acyl-CoA esters and higher rates of activity seen with the unsaturated acyl-CoA esters compared with the saturated esters. Exhibits decapping activity towards dpCoA-capped RNAs in vitro. The sequence is that of Acyl-coenzyme A diphosphatase NUDT19 (Nudt19) from Rattus norvegicus (Rat).